A 255-amino-acid polypeptide reads, in one-letter code: MAQGKNKRLSKGKKGIKKRVVDPFTKKDWYNIKAPSTFENRDVGKTLVNRSTGLRLANDYLKGRVLEVSLADLQGQEDHSFKKVKLRVDEVQGKNLLTNFHGFDFTSDKLRSLVRKWQTLIEANVTVKTSDDYFLRLFVIGFTKRQANQVKKTTYAQTSQINQIRKKMTDIVVREASNVTLAQLTAKLIPEVIGREIEKATQNIYPLQNVYIRKVKLLKQPKFDLGALLALHGGATDDNGKKVNREFKDVVLESV.

Position 2 is an N-acetylalanine; partial (alanine 2).

It belongs to the eukaryotic ribosomal protein eS1 family. Component of the small ribosomal subunit. Mature ribosomes consist of a small (40S) and a large (60S) subunit. The 40S subunit contains about 33 different proteins and 1 molecule of RNA (18S). The 60S subunit contains about 49 different proteins and 3 molecules of RNA (25S, 5.8S and 5S).

The protein localises to the cytoplasm. The protein is Small ribosomal subunit protein eS1 of Yarrowia lipolytica (strain CLIB 122 / E 150) (Yeast).